Reading from the N-terminus, the 669-residue chain is Hypoxia-inducible factor 3-alpha (669 aa).

A disordered region spans residues 1–27; the sequence is MALGLQRARSTTELRKEKSRDAARSRR. The span at 10–27 shows a compositional bias: basic and acidic residues; it reads STTELRKEKSRDAARSRR. The region spanning 14–67 is the bHLH domain; the sequence is LRKEKSRDAARSRRSQETEVLYQLAHTLPFARGVSAHLDKASIMRLTISYLRMH. The tract at residues 77–100 is nuclear localization signal; sequence QVGAGGEPLDACYLKALEGFVMVL. PAS domains lie at 82–154 and 227–297; these read GEPL…LSRR and PHPG…LSKG. The interval 230–274 is nuclear export signal; sequence GSLEPPLGRGAFLSRHSLDMKFTYCDDRIAEVAGYSPDDLIGCSA. The disordered stretch occupies residues 354–389; it reads EQTEQHSRRPIQRGAPSQKDTPNPGDSLDTPGPRIL. The short motif at 414–418 is the LRRLL element; sequence LRRLL. Positions 430-444 are enriched in polar residues; it reads TPSTPLATRHPQSPL. The segment at 430 to 451 is disordered; sequence TPSTPLATRHPQSPLSADLPDE. The segment at 452-581 is ODD; sequence LPVGTENVHR…TLAQSSEDED (130 aa). The interval 454–506 is NTAD; that stretch reads VGTENVHRLFTSGKDTEAVETDLDIAQDADALDLEMLAPYISMDDDFQLNASE. A Glycyl lysine isopeptide (Lys-Gly) (interchain with G-Cter in ubiquitin) cross-link involves residue K467. The short motif at 490 to 497 is the LAPYISMD element; sequence LAPYISMD. P492 carries the post-translational modification 4-hydroxyproline. Disordered stretches follow at residues 523–600 and 619–669; these read RARS…SPEH and APGS…AQAD. Composition is skewed to low complexity over residues 530–541 and 550–564; these read LSPPALEPSLLP and SCSS…ASSP. Residue K570 forms a Glycyl lysine isopeptide (Lys-Gly) (interchain with G-Cter in ubiquitin) linkage. Over residues 629 to 646 the composition is skewed to low complexity; that stretch reads PLLNLNEPLGLGPSLLSP.

Isoform 2 interacts (via ODD domain) with VHL (via beta domain). Isoform 4 interacts with HIF1A; the interaction inhibits the binding of HIF1A to hypoxia-responsive element (HRE) and HIF1A/ARNT-dependent transcriptional activation. Isoform 4 interacts with ARNT; the interaction occurs in a HIF1A- and DNA-binding-independent manner and does not induce HIF1A/ARNT-dependent transcriptional activation. Isoform 4 interacts with EPAS1. Interacts with BAD, BCL2L2 and MCL1. In normoxia, hydroxylated on Pro-492 in the oxygen-dependent degradation domain (ODD) by prolyl hydroxylase(s) (PHD). The hydroxylated proline promotes interaction with VHL, initiating rapid ubiquitination and subsequent proteasomal degradation. In terms of processing, ubiquitinated; ubiquitination occurs in a VHL- and oxygen-dependent pathway and subsequently targeted for proteasomal degradation. In terms of tissue distribution, expressed in vascular cells (at protein level). Expressed in kidney. Expressed in lung epithelial cells. Expressed in endothelial cells (venous and arterial cells from umbilical cord and aortic endothelial cells) and in vascular smooth muscle cells (aorta). Strongly expressed in the heart, placenta, and skeletal muscle, whereas a weak expression profile was found in the lung, liver, and kidney. Expressed weakly in cell renal cell carcinoma (CC-RCC) compared to normal renal cells. Expression is down-regulated in numerous kidney tumor cells compared to non tumor kidney tissues. Isoform 2 is expressed in heart, placenta, lung, liver, skeletal muscle and pancreas and in numerous cancer cell lines. Isoform 3 and isoform 4 are weakly expressed in heart, placenta, lung, liver, skeletal muscle and pancreas. Isoform 4 is expressed in fetal tissues, such as heart, brain, thymus, lung, liver, skeletal kidney and spleen. Isoform 3 is weakly expressed in fetal tissues, such as liver and kidney.

Its subcellular location is the nucleus. It is found in the cytoplasm. The protein localises to the nucleus speckle. The protein resides in the mitochondrion. Functionally, acts as a transcriptional regulator in adaptive response to low oxygen tension. Acts as a regulator of hypoxia-inducible gene expression. Functions as an inhibitor of angiogenesis in hypoxic cells of the cornea. Plays a role in the development of the cardiorespiratory system. May also be involved in apoptosis. Its function is as follows. Attenuates the ability of transcription factor HIF1A to bind to hypoxia-responsive elements (HRE) located within the enhancer/promoter of hypoxia-inducible target genes and hence inhibits HRE-driven transcriptional activation. Also inhibits hypoxia-inducible ARNT-mediated gene expression. In terms of biological role, attenuates the ability of transcription factor HIF1A to bind to hypoxia-responsive elements (HRE) located within the enhancer/promoter of hypoxia-inducible target genes and hence inhibits HRE-driven transcriptional activation. Attenuates the ability of transcription factor HIF1A and EPAS1/HIF2A to bind to hypoxia-responsive elements (HRE) located within the enhancer/promoter of hypoxia-inducible target genes and hence inhibits HRE-driven transcriptional activation. May act as a tumor suppressor and inhibits malignant cell transformation. The polypeptide is Hypoxia-inducible factor 3-alpha (Homo sapiens (Human)).